We begin with the raw amino-acid sequence, 122 residues long: UPF0102 protein DIP1513 (122 aa).

It belongs to the UPF0102 family.

The chain is UPF0102 protein DIP1513 from Corynebacterium diphtheriae (strain ATCC 700971 / NCTC 13129 / Biotype gravis).